The following is a 222-amino-acid chain: Vespryn (222 aa).

The first 44 residues, 1–44 (MSPSAGLQFSLYFLQTKKVLWKLTDKEKGLCYILLFTLCFFADQ), serve as a signal peptide directing secretion. The propeptide occupies 45–52 (ENGGKALA). A B30.2/SPRY domain is found at 53–159 (SPPGIWKRAD…RIWQMGLWWL (107 aa)). Residues 160–222 (RHLETDPGRV…LGGTVSLTTL (63 aa)) constitute a propeptide that is removed on maturation. Asparagine 195 carries an N-linked (GlcNAc...) asparagine glycan.

This sequence belongs to the ohanin/vespryn family. Expressed by the venom gland.

It localises to the secreted. In terms of biological role, neurotoxin that produces dose-dependent hypolocomotion and hyperalgesia in mice. May directly act on the central nervous system, as it is 6500-fold more potent when administered intracerebroventricularly than intraperitoneal. This chain is Vespryn, found in Crotalus adamanteus (Eastern diamondback rattlesnake).